Here is a 464-residue protein sequence, read N- to C-terminus: Septin homolog spn5 (464 aa).

The tract at residues 28 to 91 (QVDESSAKRS…VPNSNGKSIP (64 aa)) is disordered. Basic and acidic residues-rich tracts occupy residues 41 to 54 (ESRKSKDVTRKEQI) and 69 to 81 (TAKDKKTEFKQDE). Positions 115-370 (NGIDINLIVV…DTFRTEKLVA (256 aa)) constitute a Septin-type G domain. Positions 125 to 132 (GESSLGKT) are G1 motif. GTP contacts are provided by residues 125–132 (GESSLGKT), Thr151, Gly177, 257–265 (KADTMTSDE), Gly304, and Arg319. The G3 motif stretch occupies residues 174 to 177 (DTPG). The G4 motif stretch occupies residues 256 to 259 (GKAD). Positions 396-453 (LVEEALTKVMKEKYREKENNLELLETNLKTHHKDYKHALKKRITALEEEKNRLIKEIG) form a coiled coil.

This sequence belongs to the TRAFAC class TrmE-Era-EngA-EngB-Septin-like GTPase superfamily. Septin GTPase family. As to quaternary structure, component of the sporulation-specific septin complex composed of at least spn2, spn5, spn6 and spn7.

The protein localises to the nucleus. The protein resides in the forespore membrane. Functionally, septin-like protein involved in the correct orientation of forespore membrane extension during sporulation. This Schizosaccharomyces pombe (strain 972 / ATCC 24843) (Fission yeast) protein is Septin homolog spn5 (spn5).